Reading from the N-terminus, the 562-residue chain is NAD-dependent malic enzyme (562 aa).

The active-site Proton donor is Tyr-101. Arg-154 contacts NAD(+). The active-site Proton acceptor is the Lys-172. The a divalent metal cation site is built by Glu-243, Asp-244, and Asp-267. Residues Asp-267 and Asn-415 each contribute to the NAD(+) site.

It belongs to the malic enzymes family. In terms of assembly, homotetramer. It depends on Mg(2+) as a cofactor. The cofactor is Mn(2+).

The enzyme catalyses (S)-malate + NAD(+) = pyruvate + CO2 + NADH. It carries out the reaction oxaloacetate + H(+) = pyruvate + CO2. This chain is NAD-dependent malic enzyme, found in Shewanella baltica (strain OS223).